Here is a 155-residue protein sequence, read N- to C-terminus: Ribonuclease H (155 aa).

The RNase H type-1 domain occupies 5-146 (DQKPVIIHTD…ADQLARDGLT (142 aa)). Positions 14, 52, 74, and 138 each coordinate Mg(2+). Residues 133–155 (ENERADQLARDGLTENRMKSRVK) form a disordered region.

The protein belongs to the RNase H family. In terms of assembly, monomer. It depends on Mg(2+) as a cofactor.

It is found in the cytoplasm. It carries out the reaction Endonucleolytic cleavage to 5'-phosphomonoester.. In terms of biological role, endonuclease that specifically degrades the RNA of RNA-DNA hybrids. The protein is Ribonuclease H of Rhodopseudomonas palustris (strain ATCC BAA-98 / CGA009).